The primary structure comprises 254 residues: Triosephosphate isomerase (254 aa).

Substrate is bound at residue 12–14 (NWK). His-99 serves as the catalytic Electrophile. Glu-169 acts as the Proton acceptor in catalysis. Residues Gly-175, Ser-214, and 235–236 (GG) each bind substrate.

The protein belongs to the triosephosphate isomerase family. Homodimer.

It is found in the cytoplasm. It catalyses the reaction D-glyceraldehyde 3-phosphate = dihydroxyacetone phosphate. The protein operates within carbohydrate biosynthesis; gluconeogenesis. It participates in carbohydrate degradation; glycolysis; D-glyceraldehyde 3-phosphate from glycerone phosphate: step 1/1. Involved in the gluconeogenesis. Catalyzes stereospecifically the conversion of dihydroxyacetone phosphate (DHAP) to D-glyceraldehyde-3-phosphate (G3P). The sequence is that of Triosephosphate isomerase from Chelativorans sp. (strain BNC1).